The following is a 259-amino-acid chain: Kynurenine formamidase (259 aa).

The short motif at 34 to 38 (HGGAW) is the HGGXW element. The active-site Nucleophile is the Ser103. Catalysis depends on residues Asp196 and His228.

Belongs to the kynurenine formamidase family. In terms of assembly, homodimer.

It catalyses the reaction N-formyl-L-kynurenine + H2O = L-kynurenine + formate + H(+). The protein operates within amino-acid degradation; L-tryptophan degradation via kynurenine pathway; L-kynurenine from L-tryptophan: step 2/2. In terms of biological role, catalyzes the hydrolysis of N-formyl-L-kynurenine to L-kynurenine, the second step in the kynurenine pathway of tryptophan degradation. Kynurenine may be further oxidized to nicotinic acid, NAD(H) and NADP(H). Required for elimination of toxic metabolites. This chain is Kynurenine formamidase, found in Meyerozyma guilliermondii (strain ATCC 6260 / CBS 566 / DSM 6381 / JCM 1539 / NBRC 10279 / NRRL Y-324) (Yeast).